The following is a 938-amino-acid chain: Isoleucine--tRNA ligase (938 aa).

The 'HIGH' region motif lies at 58 to 68 (PYANGNIHIGH). Glutamate 562 provides a ligand contact to L-isoleucyl-5'-AMP. The 'KMSKS' region signature appears at 603–607 (KMSKS). Position 606 (lysine 606) interacts with ATP. The Zn(2+) site is built by cysteine 901, cysteine 904, cysteine 921, and cysteine 924.

The protein belongs to the class-I aminoacyl-tRNA synthetase family. IleS type 1 subfamily. Monomer. It depends on Zn(2+) as a cofactor.

It localises to the cytoplasm. It carries out the reaction tRNA(Ile) + L-isoleucine + ATP = L-isoleucyl-tRNA(Ile) + AMP + diphosphate. Functionally, catalyzes the attachment of isoleucine to tRNA(Ile). As IleRS can inadvertently accommodate and process structurally similar amino acids such as valine, to avoid such errors it has two additional distinct tRNA(Ile)-dependent editing activities. One activity is designated as 'pretransfer' editing and involves the hydrolysis of activated Val-AMP. The other activity is designated 'posttransfer' editing and involves deacylation of mischarged Val-tRNA(Ile). The polypeptide is Isoleucine--tRNA ligase (Actinobacillus pleuropneumoniae serotype 5b (strain L20)).